A 205-amino-acid chain; its full sequence is SREBP regulating gene protein (205 aa).

At 1-16 (MVNLAAMVWRRLLRKR) the chain is on the cytoplasmic side. A helical transmembrane segment spans residues 17-35 (WVLALVFGLSLVYFLSSTF). The Lumenal portion of the chain corresponds to 36–205 (KQEERAVRDR…GESPPELFPA (170 aa)). An N-linked (GlcNAc...) asparagine glycan is attached at Asn-67.

The protein belongs to the SPRING family. As to quaternary structure, interacts with SCAP.

It is found in the golgi apparatus membrane. Functionally, positively regulates hepatic SREBP signaling pathway by modulating the proper localization of SCAP (SREBP cleavage-activating protein) to the endoplasmic reticulum, thereby controlling the level of functional SCAP. This is SREBP regulating gene protein from Homo sapiens (Human).